A 285-amino-acid polypeptide reads, in one-letter code: Flagellar filament core protein flaB2 (285 aa).

The protein belongs to the bacterial flagellin family. The flagellum consists of an outer layer composed of two sheath proteins, flaA1 (44 kDa) and flaA2 (35 kDa) around a core that contains three proteins flaB1 (37 kDa), flaB2 (34 kDa) and flaB3 (32 kDa).

The protein localises to the periplasmic flagellum. It localises to the periplasm. Component of the core of the flagella. The polypeptide is Flagellar filament core protein flaB2 (flaB2) (Brachyspira hyodysenteriae (Treponema hyodysenteriae)).